The following is a 207-amino-acid chain: Uracil phosphoribosyltransferase (207 aa).

5-phospho-alpha-D-ribose 1-diphosphate-binding positions include R77, R102, and 129 to 137 (DPMLATGVS). Residues I192 and 197–199 (GDA) contribute to the uracil site. D198 is a 5-phospho-alpha-D-ribose 1-diphosphate binding site.

This sequence belongs to the UPRTase family. Mg(2+) is required as a cofactor.

It catalyses the reaction UMP + diphosphate = 5-phospho-alpha-D-ribose 1-diphosphate + uracil. Its pathway is pyrimidine metabolism; UMP biosynthesis via salvage pathway; UMP from uracil: step 1/1. Allosterically activated by GTP. Functionally, catalyzes the conversion of uracil and 5-phospho-alpha-D-ribose 1-diphosphate (PRPP) to UMP and diphosphate. In Fervidobacterium nodosum (strain ATCC 35602 / DSM 5306 / Rt17-B1), this protein is Uracil phosphoribosyltransferase.